The primary structure comprises 284 residues: 2-dehydro-3-deoxyphosphooctonate aldolase (284 aa).

Belongs to the KdsA family.

It is found in the cytoplasm. The enzyme catalyses D-arabinose 5-phosphate + phosphoenolpyruvate + H2O = 3-deoxy-alpha-D-manno-2-octulosonate-8-phosphate + phosphate. The protein operates within carbohydrate biosynthesis; 3-deoxy-D-manno-octulosonate biosynthesis; 3-deoxy-D-manno-octulosonate from D-ribulose 5-phosphate: step 2/3. It functions in the pathway bacterial outer membrane biogenesis; lipopolysaccharide biosynthesis. This chain is 2-dehydro-3-deoxyphosphooctonate aldolase, found in Escherichia coli O6:H1 (strain CFT073 / ATCC 700928 / UPEC).